Here is a 502-residue protein sequence, read N- to C-terminus: uncharacterized protein (502 aa).

Residues 1–21 (MKIFLVFLSVFFFNGCFGLVY) form a helical membrane-spanning segment. 2 consecutive PLD phosphodiesterase domains span residues 162-189 (IKKR…GDNY) and 396-423 (TKHS…DPRS).

The protein belongs to the phospholipase D family. Cardiolipin synthase subfamily.

The protein localises to the cell membrane. This is an uncharacterized protein from Helicobacter pylori (strain ATCC 700392 / 26695) (Campylobacter pylori).